A 377-amino-acid polypeptide reads, in one-letter code: Membrane protein MLC1 (377 aa).

A compositionally biased stretch (basic and acidic residues) spans 1–23; that stretch reads MTQEPFREELAYDRMPTLERGRQ. Residues 1–36 are disordered; that stretch reads MTQEPFREELAYDRMPTLERGRQDPASYAPDAKPSD. The next 4 helical transmembrane spans lie at 52-72, 82-100, 111-131, and 144-164; these read WVFSVLMGSCLLVTSGFSLYL, YLRCAAGSCIPSAIVSFTV, FQILFVSTFAVTTTCLIWFGC, and FNLILLLLLELLMAATVIIAA. A phosphoserine mark is found at Ser177 and Ser179. Helical transmembrane passes span 199–219, 230–250, 257–277, and 304–324; these read SVVEVIAGISAVLGGIIALNV, VTFFWILVACFPSAIASHVAA, LVEVLIAISSLTSPLLFTASG, and LLLLLLLVLLLQAGLNTGTAI.

In terms of assembly, interacts with ATP1B1. Part of a complex containing ATP1B1, TRPV4, AQP4 and HEPACAM. As to expression, expressed in the brain, with highest levels found in the amygdala, nucleus caudatus, thalamus and hippocampus.

The protein resides in the membrane. It localises to the cell membrane. It is found in the cytoplasm. Its subcellular location is the perinuclear region. The protein localises to the endoplasmic reticulum. Its function is as follows. Transmembrane protein mainly expressed in brain astrocytes that may play a role in transport across the blood-brain and brain-cerebrospinal fluid barriers. Regulates the response of astrocytes to hypo-osmosis by promoting calcium influx. May function as regulatory protein of membrane protein complexes such as ion channels. This Homo sapiens (Human) protein is Membrane protein MLC1.